Consider the following 123-residue polypeptide: Large ribosomal subunit protein bL20 (123 aa).

It belongs to the bacterial ribosomal protein bL20 family.

Binds directly to 23S ribosomal RNA and is necessary for the in vitro assembly process of the 50S ribosomal subunit. It is not involved in the protein synthesizing functions of that subunit. In Chlamydia muridarum (strain MoPn / Nigg), this protein is Large ribosomal subunit protein bL20 (rplT).